The chain runs to 198 residues: Recombination protein RecR (198 aa).

Residues 57-72 (CSVCGHITDQDPCYIC) form a C4-type zinc finger. The Toprim domain occupies 80-175 (SVICVVQDPK…KLSRIAHGLP (96 aa)).

This sequence belongs to the RecR family.

Functionally, may play a role in DNA repair. It seems to be involved in an RecBC-independent recombinational process of DNA repair. It may act with RecF and RecO. The sequence is that of Recombination protein RecR from Bacillus subtilis (strain 168).